A 173-amino-acid chain; its full sequence is MDVTIQHPWFKRALGPFYPSRLFDQFFGEGLFEYDLLPFLSSTISPYYRQSLFRTVLDSGISEVRSDRDKFVIFLDVKHFSPEDLTVKVQEDFVEIHGKHNERQDDHGYISREFHRRYRLPSNVDQSALSCSLSADGMLTFSGPKVQSGLDAGHSERAIPVSREEKPSSAPSS.

M1 is subject to N-acetylmethionine. Residues 1–63 (MDVTIQHPWF…RTVLDSGISE (63 aa)) form a required for complex formation with BFSP1 and BFSP2 region. Position 6 is a deamidated glutamine; partial (Q6). A Phosphoserine modification is found at S45. A Deamidated glutamine; partial modification is found at Q50. Residues 52–162 (LFRTVLDSGI…GHSERAIPVS (111 aa)) enclose the sHSP domain. Position 70 is an N6-acetyllysine (K70). Q90 is subject to Deamidated glutamine; partial. K99 carries the post-translational modification N6-acetyllysine. A Zn(2+)-binding site is contributed by H100. The residue at position 101 (N101) is a Deamidated asparagine; partial. The Zn(2+) site is built by E102 and H107. Phosphoserine is present on S122. N123 bears the Deamidated asparagine; partial mark. The disordered stretch occupies residues 145 to 173 (KVQSGLDAGHSERAIPVSREEKPSSAPSS). Q147 carries the deamidated glutamine; partial modification. Over residues 153 to 167 (GHSERAIPVSREEKP) the composition is skewed to basic and acidic residues. H154 lines the Zn(2+) pocket. S162 is a glycosylation site (O-linked (GlcNAc) serine).

It belongs to the small heat shock protein (HSP20) family. Heteromer composed of three CRYAA and one CRYAB subunits. Inter-subunit bridging via zinc ions enhances stability, which is crucial as there is no protein turn over in the lens. Can also form homodimers and homotetramers (dimers of dimers) which serve as the building blocks of homooligomers. Within homooligomers, the zinc-binding motif is created from residues of 3 different molecules. His-100 and Glu-102 from one molecule are ligands of the zinc ion, and His-107 and His-154 residues from additional molecules complete the site with tetrahedral coordination geometry. Part of a complex required for lens intermediate filament formation composed of BFSP1, BFSP2 and CRYAA. Acetylation at Lys-70 may increase chaperone activity. Post-translationally, undergoes age-dependent proteolytical cleavage at the C-terminus.

The protein localises to the cytoplasm. It is found in the nucleus. In terms of biological role, contributes to the transparency and refractive index of the lens. Acts as a chaperone, preventing aggregation of various proteins under a wide range of stress conditions. Required for the correct formation of lens intermediate filaments as part of a complex composed of BFSP1, BFSP2 and CRYAA. This Cavia porcellus (Guinea pig) protein is Alpha-crystallin A chain (CRYAA).